The following is an 889-amino-acid chain: DNA mismatch repair protein MutS (889 aa).

620–627 (GPNMAGKS) provides a ligand contact to ATP. Positions 812 to 831 (AAAPSGAARRGRPAREKEPG) are disordered.

It belongs to the DNA mismatch repair MutS family.

This protein is involved in the repair of mismatches in DNA. It is possible that it carries out the mismatch recognition step. This protein has a weak ATPase activity. The sequence is that of DNA mismatch repair protein MutS from Syntrophobacter fumaroxidans (strain DSM 10017 / MPOB).